The primary structure comprises 376 residues: Phosphate acyltransferase (376 aa).

Residues 334–376 form a disordered region; sequence AGSLEQAKRDAGGPGSASQMASPIAGPVSGQPAEPYSAQSSKA.

Belongs to the PlsX family. As to quaternary structure, homodimer. Probably interacts with PlsY.

Its subcellular location is the cytoplasm. The catalysed reaction is a fatty acyl-[ACP] + phosphate = an acyl phosphate + holo-[ACP]. It participates in lipid metabolism; phospholipid metabolism. Catalyzes the reversible formation of acyl-phosphate (acyl-PO(4)) from acyl-[acyl-carrier-protein] (acyl-ACP). This enzyme utilizes acyl-ACP as fatty acyl donor, but not acyl-CoA. In Paraburkholderia phymatum (strain DSM 17167 / CIP 108236 / LMG 21445 / STM815) (Burkholderia phymatum), this protein is Phosphate acyltransferase.